Reading from the N-terminus, the 193-residue chain is Outer-membrane lipoprotein LolB (193 aa).

Positions 1 to 21 (MRPARRFLAALACVAGALLSA) are cleaved as a signal peptide. Cys-22 carries the N-palmitoyl cysteine lipid modification. The S-diacylglycerol cysteine moiety is linked to residue Cys-22.

It belongs to the LolB family. In terms of assembly, monomer.

It localises to the cell outer membrane. Its function is as follows. Plays a critical role in the incorporation of lipoproteins in the outer membrane after they are released by the LolA protein. The sequence is that of Outer-membrane lipoprotein LolB from Azoarcus sp. (strain BH72).